The chain runs to 270 residues: MANPFVKAWKYLMALFSSKIDEHADPKVQIQQAIEEAQRTHQALTQQAAQVIGNQRQLEMRLNRQLADIEKLQVNVRQALTLADQATAAGDAAKATEYNNAAEAFAAQLVTAEQSVEDLKTLHDQALSAAAQAKKAVERNAMVLQQKIAERTKLLSQLEQAKMQEQVSASLRSMSELAAPGNTPSLDEVRDKIERRYANAIGSAELAESSVQGRMLEVEQAGIQMAGHSRLEQIRASMRGEALPAGGTTATPRPATETSGGAIAEQPYGQ.

The tract at residues 238–270 (MRGEALPAGGTTATPRPATETSGGAIAEQPYGQ) is disordered. The span at 240-258 (GEALPAGGTTATPRPATET) shows a compositional bias: low complexity.

This sequence belongs to the PspA/Vipp/IM30 family.

It localises to the cytoplasm. Involved in resistance to stress. Associates with and regulates lipid droplets (LDs) homeostasis under conditions of stress and may regulate non-replicating persistence (NRP). Could be involved in preservation of envelope integrity and tolerance to surface stress. The chain is PspA protein from Mycobacterium tuberculosis (strain ATCC 25177 / H37Ra).